A 139-amino-acid chain; its full sequence is SPbeta prophage-derived uncharacterized protein YomN (139 aa).

The sequence is that of SPbeta prophage-derived uncharacterized protein YomN (yomN) from Bacillus subtilis (strain 168).